Here is a 347-residue protein sequence, read N- to C-terminus: Sensor protein VraS (347 aa).

The next 2 membrane-spanning stretches (helical) occupy residues 13–33 and 43–63; these read ILVYSMLAAFLFIDKVFVNII and IFGIPVFLFLNLIIILLCIIV. The Histidine kinase domain maps to 150–341; the sequence is RLARELHDSV…RIEVKAPLNK (192 aa). His-156 carries the phosphohistidine modification.

Post-translationally, autophosphorylated on His-156.

It localises to the cell membrane. It catalyses the reaction ATP + protein L-histidine = ADP + protein N-phospho-L-histidine.. Member of the two-component regulatory system PprA/PprB involved in biofilm formation by controlling the expression of many related genes including type IVb pili major subunit flp pilin, adhesin bapA or cupE fimbriae. Also modulates quorum-sensing signal production acting on both negative and positive modulators. Functions as a heme sensor histidine kinase which is autophosphorylated at a histidine residue and transfers its phosphate group to PprB. This is Sensor protein VraS (vraS) from Staphylococcus aureus (strain COL).